A 426-amino-acid polypeptide reads, in one-letter code: Enolase (426 aa).

Glutamine 163 is a (2R)-2-phosphoglycerate binding site. The active-site Proton donor is the glutamate 205. Residues aspartate 242, glutamate 285, and aspartate 312 each coordinate Mg(2+). The (2R)-2-phosphoglycerate site is built by lysine 337, arginine 366, serine 367, and lysine 388. Residue lysine 337 is the Proton acceptor of the active site.

Belongs to the enolase family. Requires Mg(2+) as cofactor.

It is found in the cytoplasm. Its subcellular location is the secreted. It localises to the cell surface. It carries out the reaction (2R)-2-phosphoglycerate = phosphoenolpyruvate + H2O. The protein operates within carbohydrate degradation; glycolysis; pyruvate from D-glyceraldehyde 3-phosphate: step 4/5. Its function is as follows. Catalyzes the reversible conversion of 2-phosphoglycerate (2-PG) into phosphoenolpyruvate (PEP). It is essential for the degradation of carbohydrates via glycolysis. The sequence is that of Enolase from Desulfosudis oleivorans (strain DSM 6200 / JCM 39069 / Hxd3) (Desulfococcus oleovorans).